The chain runs to 306 residues: Glutaminase (306 aa).

Ser64, Asn115, Glu159, Asn166, Tyr190, Tyr242, and Val260 together coordinate substrate.

Belongs to the glutaminase family. Homotetramer.

It carries out the reaction L-glutamine + H2O = L-glutamate + NH4(+). In Aeromonas hydrophila subsp. hydrophila (strain ATCC 7966 / DSM 30187 / BCRC 13018 / CCUG 14551 / JCM 1027 / KCTC 2358 / NCIMB 9240 / NCTC 8049), this protein is Glutaminase.